Consider the following 288-residue polypeptide: UPF0761 membrane protein HSM_1104 (288 aa).

Transmembrane regions (helical) follow at residues 36–56, 92–112, 127–147, 176–196, 200–220, and 240–260; these read TLAL…FPVF, QMSA…IHSI, PAIF…IVIA, LLSL…YMVV, KVSI…FTLG, and AMAT…AVLL.

Belongs to the UPF0761 family.

It localises to the cell inner membrane. In Histophilus somni (strain 2336) (Haemophilus somnus), this protein is UPF0761 membrane protein HSM_1104.